The primary structure comprises 354 residues: uncharacterized protein (354 aa).

This sequence to yeast YHR056c.

This is an uncharacterized protein from Saccharomyces cerevisiae (strain ATCC 204508 / S288c) (Baker's yeast).